We begin with the raw amino-acid sequence, 331 residues long: Peroxidase 69 (331 aa).

Residues 1–23 form the signal peptide; sequence MGRGYNLLFVLVTFLVLVAAVTA. Disulfide bonds link C46–C122, C79–C84, C128–C327, and C205–C237. H77 functions as the Proton acceptor in the catalytic mechanism. Ca(2+) is bound by residues D78, V81, G83, D85, and S87. Residue N93 is glycosylated (N-linked (GlcNAc...) asparagine). P168 contacts substrate. H198 is a binding site for heme b. T199 lines the Ca(2+) pocket. An N-linked (GlcNAc...) asparagine glycan is attached at N216. 3 residues coordinate Ca(2+): D248, S251, and D256.

Belongs to the peroxidase family. Classical plant (class III) peroxidase subfamily. The cofactor is heme b. Ca(2+) serves as cofactor. As to expression, mainly expressed in roots and slightly in leaves.

The protein resides in the secreted. It catalyses the reaction 2 a phenolic donor + H2O2 = 2 a phenolic radical donor + 2 H2O. In terms of biological role, removal of H(2)O(2), oxidation of toxic reductants, biosynthesis and degradation of lignin, suberization, auxin catabolism, response to environmental stresses such as wounding, pathogen attack and oxidative stress. These functions might be dependent on each isozyme/isoform in each plant tissue. The sequence is that of Peroxidase 69 (PER69) from Arabidopsis thaliana (Mouse-ear cress).